The chain runs to 855 residues: Mitofusin FZO1 (855 aa).

A compositionally biased stretch (basic and acidic residues) spans 1 to 19; that stretch reads MSEGKQQFKDSNKPHKDST. Residues 1 to 27 form a disordered region; it reads MSEGKQQFKDSNKPHKDSTDQDDDAAT. At 1 to 705 the chain is on the cytoplasmic side; it reads MSEGKQQFKD…PSLLFTSKIP (705 aa). The segment at 91–190 is HRN; the sequence is NYNNNRVLLK…KRVDDVSSKV (100 aa). The region spanning 184-467 is the Dynamin-type G domain; sequence DDVSSKVFIT…KKRSLSKLLP (284 aa). GTP-binding positions include 197 to 202 and 370 to 373; these read NTGKSA and KKFD. Residue Lys-398 forms a Glycyl lysine isopeptide (Lys-Gly) (interchain with G-Cter in ubiquitin) linkage. Residue Ser-408 coordinates GTP. Positions 413 to 433 are enriched in basic and acidic residues; the sequence is ELPHYHNENDNEDHGDRKPDD. The tract at residues 413 to 447 is disordered; it reads ELPHYHNENDNEDHGDRKPDDDPYSSSDPDPDFDS. A Glycyl lysine isopeptide (Lys-Gly) (interchain with G-Cter in ubiquitin) cross-link involves residue Lys-464. Residues 484–547 are HR1; sequence KSNMKMYSEE…KEALLNALDV (64 aa). The tract at residues 630-843 is required for interaction with UGO1; the sequence is GKRLKVSLSI…QSLYEGTVAQ (214 aa). A helical membrane pass occupies residues 706–726; it reads TLTLYFLGSTKVVGNIILNGI. Residues 727–736 lie on the Mitochondrial intermembrane side of the membrane; sequence KLSSWSSLKK. Residues 737–757 traverse the membrane as a helical segment; it reads LSVPVIVVGSLLGLTYLIHDL. At 758-855 the chain is on the cytoplasmic side; the sequence is PRALPMNLSI…MVEEINLDID (98 aa). Residues 769–831 form an HR2 region; it reads YKRKLQELDY…KKESNLLSIK (63 aa). Positions 798–825 form a coiled coil; the sequence is TREILRSCEIIMDKKQITKKELENKKES.

The protein belongs to the TRAFAC class dynamin-like GTPase superfamily. Dynamin/Fzo/YdjA family. Mitofusin subfamily. In terms of assembly, homodimer. Dimerization depends on GTP binding. Component of a large multiprotein complex of 800 kDa. Binds the cytoplasmic domain of UGO1 which binds MGM1 through its intermembrane space domain. Interacts with MDM30. Interacts with UBP2 and UBP12. Interacts (when ubiquitinated) with DOA1; the interaction recruits FZO1 to CDC48 and promotes FZO1 proteasomal degradation. Ubiquitinated at Lys-398 and Lys-464. MDM30 and UGO1 are involved in ubiquitination. Deubiquitinated by UBP2 and UBP12. UBP2 and UBP12 recognize distinct ubiquitin chains on FZO1 that have opposing effects on mitochondrial fusion. UBP2 removes ubiquitin chains that initiate proteolysis of FZO1 and inhibit fusion. UBP12 recognizes ubiquitin chains that stabilize FZO1 and promote mitochondrial fusion. UBP12 deubiquitylates FZO1 only after oligomerization.

The protein localises to the mitochondrion outer membrane. It carries out the reaction GTP + H2O = GDP + phosphate + H(+). Its function is as follows. Essential transmembrane GTPase, which mediates mitochondrial fusion. Fusion proceeds through several steps; first mitochondria are tethered together, then brought into close contact, followed by the formation of a docking ring around contact areas, and finally membrane fusion. Fusion of mitochondria occurs in many cell types and constitutes an important step in mitochondrial morphology, which is balanced between fusion and fission, mediated by FZO1 and DNM1, respectively. Functions antagonistically with DNM1. Probably acts by forming membrane contact sites that mediate mitochondrial membrane fusion. Mitochondrial docking and fusion requires GTP hydrolysis. Mitochondrial fusion also promotes increased lifespan. The sequence is that of Mitofusin FZO1 (FZO1) from Saccharomyces cerevisiae (strain ATCC 204508 / S288c) (Baker's yeast).